We begin with the raw amino-acid sequence, 86 residues long: MNFQPLGKRVLVERVEETKTTASGIIIPDNAKEKPLSGEVKAVGPEVEGVKTGDKVVFAKYGGTEINLDDKTYLVLNIDDVLGVIK.

The protein belongs to the GroES chaperonin family. In terms of assembly, heptamer of 7 subunits arranged in a ring. Interacts with the chaperonin GroEL.

The protein resides in the cytoplasm. Together with the chaperonin GroEL, plays an essential role in assisting protein folding. The GroEL-GroES system forms a nano-cage that allows encapsulation of the non-native substrate proteins and provides a physical environment optimized to promote and accelerate protein folding. GroES binds to the apical surface of the GroEL ring, thereby capping the opening of the GroEL channel. This chain is Co-chaperonin GroES, found in Campylobacter curvus (strain 525.92).